Consider the following 294-residue polypeptide: Shikimate dehydrogenase (NADP(+)) (294 aa).

Residues S23 to S25 and T70 contribute to the shikimate site. The Proton acceptor role is filled by K74. Shikimate is bound by residues N95 and D110. NADP(+)-binding positions include G135 to A139, N159 to R164, and M232. Shikimate is bound at residue Y234. An NADP(+)-binding site is contributed by G255.

It belongs to the shikimate dehydrogenase family. As to quaternary structure, homodimer.

It catalyses the reaction shikimate + NADP(+) = 3-dehydroshikimate + NADPH + H(+). The protein operates within metabolic intermediate biosynthesis; chorismate biosynthesis; chorismate from D-erythrose 4-phosphate and phosphoenolpyruvate: step 4/7. In terms of biological role, involved in the biosynthesis of the chorismate, which leads to the biosynthesis of aromatic amino acids. Catalyzes the reversible NADPH linked reduction of 3-dehydroshikimate (DHSA) to yield shikimate (SA). This is Shikimate dehydrogenase (NADP(+)) from Cupriavidus pinatubonensis (strain JMP 134 / LMG 1197) (Cupriavidus necator (strain JMP 134)).